The primary structure comprises 306 residues: MKPTKQILEDILDEVRPLIGQGKVADYIPALACVPNDKLGIAVFTNDGEMLTAGDATECFSIQSISKALSLTLAMELYQPEELWQRVGKEPSGQAFNSLIQLEMEQGVPRNPFINAGAIVISDMLYSRFSAPKHRLLEFVRKLSGNEHIIYDRVVANSEMDHSDRNASIAYLMRSFGNFDNEVMPVLKNYFHACALSMNCVDLARTFGYLANKGIQPGISEPIVTPMQCKQINALMATCGLYDGAGEFAYRVGMPGKSGVGGGIIAIVPGEMTIAVWSPELDPSGNSLAGTKALELLSERIGRSIF.

Positions 64, 115, 159, 166, 190, 242, and 260 each coordinate substrate.

It belongs to the glutaminase family. As to quaternary structure, homotetramer.

The catalysed reaction is L-glutamine + H2O = L-glutamate + NH4(+). This chain is Glutaminase, found in Aliivibrio fischeri (strain MJ11) (Vibrio fischeri).